The chain runs to 309 residues: D-galacturonate reductase (309 aa).

Tyr50 acts as the Proton donor in catalysis. His109 is a binding site for substrate. Residue 210–264 participates in NADP(+) binding; the sequence is SPLGSTGSPLMSADPVVKIAEKKGISPTTVLLSYHVNRGSTVLAKSVTPARIKAN.

The protein belongs to the aldo/keto reductase family.

It carries out the reaction L-galactonate + NADP(+) = aldehydo-D-galacturonate + NADPH + H(+). The protein operates within carbohydrate acid metabolism. Mediates the reduction of D-galacturonate to L-galactonate, the first step in D-galacturonate catabolic process. Also has activity with D-glucuronate and DL-glyceraldehyde. No activity is observed with D-glucose, D-fructose, D-xylose, D-galactose, L-arabinose or D-mannose. Activity is seen only with NADPH and not with NADH. The protein is D-galacturonate reductase (gar1) of Hypocrea jecorina (Trichoderma reesei).